The sequence spans 476 residues: Siroheme synthase (476 aa).

A precorrin-2 dehydrogenase /sirohydrochlorin ferrochelatase region spans residues 1–207; it reads MTANALFPLF…QRHAEAEAVL (207 aa). Residues 25-26 and 46-47 each bind NAD(+); these read KV and PS. A Phosphoserine modification is found at S132. The uroporphyrinogen-III C-methyltransferase stretch occupies residues 220 to 476; sequence GSVTLVGAGA…SAPCPPARIL (257 aa). D252 serves as the catalytic Proton acceptor. The Proton donor role is filled by K274. Residues 305-307, V310, 335-336, M387, and G416 contribute to the S-adenosyl-L-methionine site; these read GGD and TA.

The protein in the N-terminal section; belongs to the precorrin-2 dehydrogenase / sirohydrochlorin ferrochelatase family. In the C-terminal section; belongs to the precorrin methyltransferase family.

It catalyses the reaction uroporphyrinogen III + 2 S-adenosyl-L-methionine = precorrin-2 + 2 S-adenosyl-L-homocysteine + H(+). It carries out the reaction precorrin-2 + NAD(+) = sirohydrochlorin + NADH + 2 H(+). The catalysed reaction is siroheme + 2 H(+) = sirohydrochlorin + Fe(2+). The protein operates within cofactor biosynthesis; adenosylcobalamin biosynthesis; precorrin-2 from uroporphyrinogen III: step 1/1. Its pathway is cofactor biosynthesis; adenosylcobalamin biosynthesis; sirohydrochlorin from precorrin-2: step 1/1. It participates in porphyrin-containing compound metabolism; siroheme biosynthesis; precorrin-2 from uroporphyrinogen III: step 1/1. It functions in the pathway porphyrin-containing compound metabolism; siroheme biosynthesis; siroheme from sirohydrochlorin: step 1/1. The protein operates within porphyrin-containing compound metabolism; siroheme biosynthesis; sirohydrochlorin from precorrin-2: step 1/1. Functionally, multifunctional enzyme that catalyzes the SAM-dependent methylations of uroporphyrinogen III at position C-2 and C-7 to form precorrin-2 via precorrin-1. Then it catalyzes the NAD-dependent ring dehydrogenation of precorrin-2 to yield sirohydrochlorin. Finally, it catalyzes the ferrochelation of sirohydrochlorin to yield siroheme. The polypeptide is Siroheme synthase (Xylella fastidiosa (strain M12)).